A 260-amino-acid chain; its full sequence is Malonyl-[acyl-carrier protein] O-methyltransferase (260 aa).

Belongs to the methyltransferase superfamily.

The enzyme catalyses malonyl-[ACP] + S-adenosyl-L-methionine = malonyl-[ACP] methyl ester + S-adenosyl-L-homocysteine. The protein operates within cofactor biosynthesis; biotin biosynthesis. Its function is as follows. Converts the free carboxyl group of a malonyl-thioester to its methyl ester by transfer of a methyl group from S-adenosyl-L-methionine (SAM). It allows to synthesize pimeloyl-ACP via the fatty acid synthetic pathway. This Herminiimonas arsenicoxydans protein is Malonyl-[acyl-carrier protein] O-methyltransferase.